The sequence spans 293 residues: 4-hydroxy-tetrahydrodipicolinate synthase (293 aa).

A pyruvate-binding site is contributed by threonine 46. Tyrosine 133 acts as the Proton donor/acceptor in catalysis. The Schiff-base intermediate with substrate role is filled by lysine 161. Valine 202 provides a ligand contact to pyruvate.

This sequence belongs to the DapA family. In terms of assembly, homotetramer; dimer of dimers.

The protein localises to the cytoplasm. It catalyses the reaction L-aspartate 4-semialdehyde + pyruvate = (2S,4S)-4-hydroxy-2,3,4,5-tetrahydrodipicolinate + H2O + H(+). The protein operates within amino-acid biosynthesis; L-lysine biosynthesis via DAP pathway; (S)-tetrahydrodipicolinate from L-aspartate: step 3/4. In terms of biological role, catalyzes the condensation of (S)-aspartate-beta-semialdehyde [(S)-ASA] and pyruvate to 4-hydroxy-tetrahydrodipicolinate (HTPA). This chain is 4-hydroxy-tetrahydrodipicolinate synthase, found in Wolbachia pipientis wMel.